A 518-amino-acid chain; its full sequence is Membrane-bound lytic murein transglycosylase F (518 aa).

The signal sequence occupies residues 1–21; that stretch reads MKKLKINYLFIGILALLLAVA. Positions 22–269 are non-LT domain; that stretch reads LWPSIPWFGK…RIEEKYLGHG (248 aa). The tract at residues 270–518 is LT domain; the sequence is DDFDYVDTRT…SRKGSEEKQN (249 aa). Glu-314 is a catalytic residue.

This sequence in the N-terminal section; belongs to the bacterial solute-binding protein 3 family. In the C-terminal section; belongs to the transglycosylase Slt family.

It is found in the cell outer membrane. It carries out the reaction Exolytic cleavage of the (1-&gt;4)-beta-glycosidic linkage between N-acetylmuramic acid (MurNAc) and N-acetylglucosamine (GlcNAc) residues in peptidoglycan, from either the reducing or the non-reducing ends of the peptidoglycan chains, with concomitant formation of a 1,6-anhydrobond in the MurNAc residue.. Functionally, murein-degrading enzyme that degrades murein glycan strands and insoluble, high-molecular weight murein sacculi, with the concomitant formation of a 1,6-anhydromuramoyl product. Lytic transglycosylases (LTs) play an integral role in the metabolism of the peptidoglycan (PG) sacculus. Their lytic action creates space within the PG sacculus to allow for its expansion as well as for the insertion of various structures such as secretion systems and flagella. The polypeptide is Membrane-bound lytic murein transglycosylase F (Escherichia coli (strain SMS-3-5 / SECEC)).